Consider the following 363-residue polypeptide: NAD(P)H-quinone oxidoreductase subunit 1, chloroplastic (363 aa).

The next 9 helical transmembrane spans lie at 30-50 (LVPI…IVWL), 98-118 (FSIG…VIPF), 129-149 (IGVF…LMSG), 165-185 (AAQS…ISLL), 203-223 (LWGW…ISSL), 248-268 (YSGI…LVSS), 269-289 (LFVT…IFVP), 300-320 (VFGT…FLFI), and 334-354 (DQLL…NLLL).

This sequence belongs to the complex I subunit 1 family. In terms of assembly, NDH is composed of at least 16 different subunits, 5 of which are encoded in the nucleus.

It is found in the plastid. Its subcellular location is the chloroplast thylakoid membrane. The enzyme catalyses a plastoquinone + NADH + (n+1) H(+)(in) = a plastoquinol + NAD(+) + n H(+)(out). It catalyses the reaction a plastoquinone + NADPH + (n+1) H(+)(in) = a plastoquinol + NADP(+) + n H(+)(out). In terms of biological role, NDH shuttles electrons from NAD(P)H:plastoquinone, via FMN and iron-sulfur (Fe-S) centers, to quinones in the photosynthetic chain and possibly in a chloroplast respiratory chain. The immediate electron acceptor for the enzyme in this species is believed to be plastoquinone. Couples the redox reaction to proton translocation, and thus conserves the redox energy in a proton gradient. This chain is NAD(P)H-quinone oxidoreductase subunit 1, chloroplastic, found in Oenothera elata subsp. hookeri (Hooker's evening primrose).